Consider the following 172-residue polypeptide: Carotene biosynthesis-related protein CBR, chloroplastic (172 aa).

The segment at 41 to 66 (AENNPSTPPPSSPSPPPPPPTPAAPT) is disordered. A compositionally biased stretch (pro residues) spans 46 to 63 (STPPPSSPSPPPPPPTPA). Helical transmembrane passes span 111–131 (PTLI…PAFA) and 152–172 (FAMI…IALF).

It belongs to the ELIP/psbS family.

It is found in the plastid. Its subcellular location is the chloroplast membrane. Putative zeaxanthin binding protein. That forms photoprotective complexes within the light-harvesting antennae. The protein is Carotene biosynthesis-related protein CBR, chloroplastic (CBR) of Dunaliella salina (Green alga).